A 119-amino-acid chain; its full sequence is MRNKYIESFEKAQLENRNIPEFRAGDTVKVAVRIKEGSKERVQNYEGLCIAIRGQGTGRTFMVRKMGANSVGVERIFPLYSDSIESIEVLRKGRVRRAKLFYLRELKGKAARIKELRRK.

It belongs to the bacterial ribosomal protein bL19 family.

This protein is located at the 30S-50S ribosomal subunit interface and may play a role in the structure and function of the aminoacyl-tRNA binding site. This Sulfurovum sp. (strain NBC37-1) protein is Large ribosomal subunit protein bL19.